A 152-amino-acid polypeptide reads, in one-letter code: Xanthine-guanine phosphoribosyltransferase (152 aa).

5-phospho-alpha-D-ribose 1-diphosphate contacts are provided by residues 37 to 38 and 88 to 96; these read RG and DDLVDTGGT. Residue aspartate 89 coordinates Mg(2+). 2 residues coordinate guanine: aspartate 92 and isoleucine 135. The xanthine site is built by aspartate 92 and isoleucine 135. GMP-binding positions include 92 to 96 and 134 to 135; these read DTGGT and WI.

Belongs to the purine/pyrimidine phosphoribosyltransferase family. XGPT subfamily. As to quaternary structure, homotetramer. Requires Mg(2+) as cofactor.

It is found in the cell inner membrane. It carries out the reaction GMP + diphosphate = guanine + 5-phospho-alpha-D-ribose 1-diphosphate. The catalysed reaction is XMP + diphosphate = xanthine + 5-phospho-alpha-D-ribose 1-diphosphate. It catalyses the reaction IMP + diphosphate = hypoxanthine + 5-phospho-alpha-D-ribose 1-diphosphate. Its pathway is purine metabolism; GMP biosynthesis via salvage pathway; GMP from guanine: step 1/1. It functions in the pathway purine metabolism; XMP biosynthesis via salvage pathway; XMP from xanthine: step 1/1. Its function is as follows. Purine salvage pathway enzyme that catalyzes the transfer of the ribosyl-5-phosphate group from 5-phospho-alpha-D-ribose 1-diphosphate (PRPP) to the N9 position of the 6-oxopurines guanine and xanthine to form the corresponding ribonucleotides GMP (guanosine 5'-monophosphate) and XMP (xanthosine 5'-monophosphate), with the release of PPi. To a lesser extent, also acts on hypoxanthine. The polypeptide is Xanthine-guanine phosphoribosyltransferase (Yersinia enterocolitica serotype O:8 / biotype 1B (strain NCTC 13174 / 8081)).